A 238-amino-acid chain; its full sequence is 1-(5-phosphoribosyl)-5-[(5-phosphoribosylamino)methylideneamino] imidazole-4-carboxamide isomerase (238 aa).

Residue Asp-8 is the Proton acceptor of the active site. Catalysis depends on Asp-127, which acts as the Proton donor.

The protein belongs to the HisA/HisF family.

The protein localises to the cytoplasm. It carries out the reaction 1-(5-phospho-beta-D-ribosyl)-5-[(5-phospho-beta-D-ribosylamino)methylideneamino]imidazole-4-carboxamide = 5-[(5-phospho-1-deoxy-D-ribulos-1-ylimino)methylamino]-1-(5-phospho-beta-D-ribosyl)imidazole-4-carboxamide. The protein operates within amino-acid biosynthesis; L-histidine biosynthesis; L-histidine from 5-phospho-alpha-D-ribose 1-diphosphate: step 4/9. This is 1-(5-phosphoribosyl)-5-[(5-phosphoribosylamino)methylideneamino] imidazole-4-carboxamide isomerase from Nitratiruptor sp. (strain SB155-2).